A 2250-amino-acid polypeptide reads, in one-letter code: RNA1 polyprotein (2250 aa).

The span at 346-371 (SPTVTPSSTPSTSRSSSPEPRVSSPS) shows a compositional bias: low complexity. Residues 346–372 (SPTVTPSSTPSTSRSSSPEPRVSSPSG) are disordered. The SF3 helicase domain maps to 849–1020 (LRDAHNALSR…PHFHEFNLLA (172 aa)). Residues 1225–1245 (VALCAVLLVGYLIIKFAIFLF) traverse the membrane as a helical segment. S1299 is modified (O-(5'-phospho-RNA)-serine). The Peptidase C3 domain maps to 1319–1532 (GPEEEPSQSL…YAQIVTLDDF (214 aa)). Catalysis depends on for picornain 3C-like protease activity residues H1362, D1400, and C1495. In terms of domain architecture, RdRp catalytic spans 1814 to 1956 (TNWFNGDYSR…SVNDVITEKF (143 aa)).

Belongs to the comoviridae genome polyprotein B family. Post-translationally, specific enzymatic cleavages by picornain 3C-like protease in vivo yield mature proteins. Picornain 3C-like protease is autocatalytically processed. In terms of processing, viral genome-linked protein (VPg) is uridylylated by the polymerase and is covalently linked to the 5'-end of genomic RNA. This uridylylated form acts as a nucleotide-peptide primer for the polymerase.

Its subcellular location is the host membrane. It catalyses the reaction RNA(n) + a ribonucleoside 5'-triphosphate = RNA(n+1) + diphosphate. Picornain 3C-like protease is a thiol protease that probably cleaves the B and M polyproteins. Functionally, viral genome-linked protein (VPg) plays a role in RNA replication. This Balsamorhiza sagittata (Apple) protein is RNA1 polyprotein.